We begin with the raw amino-acid sequence, 205 residues long: MKKIVLLVTLVFSINYSFANASDDLINKIKNIHSMSASFDQKLINGGRASDNISSKGYMSLKKPKFFRWITTTPNNQEIISNGSKLWIYDGDLEQVIIKKVSNNIAQFPYLILLSKNTDNINKLFTVKELDKNTYLLKPKNDQMIDSIQIKFSDNENLEYLAISTSLNQFTKISFSDVKTDIDIDNNKFDFKIPDDTDVIDETKD.

Residues 1–21 (MKKIVLLVTLVFSINYSFANA) form the signal peptide.

The protein belongs to the LolA family. In terms of assembly, monomer.

The protein resides in the periplasm. Functionally, participates in the translocation of lipoproteins from the inner membrane to the outer membrane. Only forms a complex with a lipoprotein if the residue after the N-terminal Cys is not an aspartate (The Asp acts as a targeting signal to indicate that the lipoprotein should stay in the inner membrane). This Francisella philomiragia subsp. philomiragia (strain ATCC 25017 / CCUG 19701 / FSC 153 / O#319-036) protein is Outer-membrane lipoprotein carrier protein.